The chain runs to 553 residues: CDP-diacylglycerol--glycerol-3-phosphate 3-phosphatidyltransferase, mitochondrial (553 aa).

Residues 1 to 25 (MAAPAAGPVFWRRLLGLLPGRPGLA) constitute a mitochondrion transit peptide. S46 is subject to Phosphoserine. Residue 121 to 128 (ASLYLGTG) coordinates ATP. PLD phosphodiesterase domains follow at residues 212 to 238 (TIGL…SDSY) and 457 to 490 (TGWT…GYRS). Catalysis depends on residues H217, K219, and D224.

It belongs to the CDP-alcohol phosphatidyltransferase class-II family.

It is found in the mitochondrion. The catalysed reaction is a CDP-1,2-diacyl-sn-glycerol + sn-glycerol 3-phosphate = a 1,2-diacyl-sn-glycero-3-phospho-(1'-sn-glycero-3'-phosphate) + CMP + H(+). It functions in the pathway phospholipid metabolism; phosphatidylglycerol biosynthesis; phosphatidylglycerol from CDP-diacylglycerol: step 1/2. With respect to regulation, activated by calcium and magnesium and inhibited by other bivalent cations. Functions in the biosynthesis of the anionic phospholipids phosphatidylglycerol and cardiolipin. The sequence is that of CDP-diacylglycerol--glycerol-3-phosphate 3-phosphatidyltransferase, mitochondrial (PGS1) from Cricetulus griseus (Chinese hamster).